Reading from the N-terminus, the 165-residue chain is Thiol peroxidase (165 aa).

One can recognise a Thioredoxin domain in the interval 18–165 (PAVGSPAPAF…YEAALAALGA (148 aa)). The active-site Cysteine sulfenic acid (-SOH) intermediate is C60. A disulfide bond links C60 and C93.

Belongs to the peroxiredoxin family. Tpx subfamily. In terms of assembly, homodimer.

It catalyses the reaction a hydroperoxide + [thioredoxin]-dithiol = an alcohol + [thioredoxin]-disulfide + H2O. Functionally, thiol-specific peroxidase that catalyzes the reduction of hydrogen peroxide and organic hydroperoxides to water and alcohols, respectively. Plays a role in cell protection against oxidative stress by detoxifying peroxides. The protein is Thiol peroxidase of Mycobacterium bovis (strain ATCC BAA-935 / AF2122/97).